Here is a 430-residue protein sequence, read N- to C-terminus: ATP-dependent RNA helicase RhlB (430 aa).

Positions 9–37 match the Q motif motif; sequence QKFSDFALHPQVIEALESKGFHNCTPIQA. One can recognise a Helicase ATP-binding domain in the interval 40–219; the sequence is LPLALSGRDV…FEQMNNAEYV (180 aa). 53-60 is a binding site for ATP; sequence AQTGTGKT. Residues 165 to 168 carry the DEAD box motif; it reads DEAD. The Helicase C-terminal domain occupies 245 to 390; that stretch reads RLLQTLLEEE…VSKYNSDALM (146 aa). A disordered region spans residues 392–430; sequence DLPAPKRLTRPPRSNNGPRRHNNAPRRSGAPRNNRKRAD.

The protein belongs to the DEAD box helicase family. RhlB subfamily. As to quaternary structure, component of the RNA degradosome, which is a multiprotein complex involved in RNA processing and mRNA degradation.

The protein localises to the cytoplasm. It catalyses the reaction ATP + H2O = ADP + phosphate + H(+). Its function is as follows. DEAD-box RNA helicase involved in RNA degradation. Has RNA-dependent ATPase activity and unwinds double-stranded RNA. This chain is ATP-dependent RNA helicase RhlB, found in Pectobacterium carotovorum subsp. carotovorum (strain PC1).